The following is a 150-amino-acid chain: Major facilitator superfamily domain-containing 14C pseudogene (150 aa).

Residues 1-25 are disordered; that stretch reads MSVEPPPELEEKAASEPEAGAMPEK. The Extracellular segment spans residues 1-49; the sequence is MSVEPPPELEEKAASEPEAGAMPEKRAGAQAAGSTWLQGFGPPSVYHAA. The helical transmembrane segment at 50 to 70 threads the bilayer; sequence IVIFLEFFAWGLLTTPMLTVL. Over 71-82 the chain is Cytoplasmic; it reads HETFSQHTFLMN. Residues 83–103 traverse the membrane as a helical segment; it reads GLIQGVKGLLSFLSAPLIGAL. Residues 104–111 lie on the Extracellular side of the membrane; it reads SDVWGRKP. Residues 112–132 traverse the membrane as a helical segment; the sequence is FLLGTVFFTCFPIPLMRISPC. The Cytoplasmic portion of the chain corresponds to 133-150; that stretch reads RVWWRAPVVPATCGRRMA.

The protein belongs to the major facilitator superfamily.

It localises to the membrane. The polypeptide is Major facilitator superfamily domain-containing 14C pseudogene (Homo sapiens (Human)).